The following is a 311-amino-acid chain: 3'(2'),5'-bisphosphate nucleotidase 1 (311 aa).

The Proton acceptor role is filled by D49. Mg(2+) is bound by residues E72, D116, L118, and D119. Catalysis depends on T121, which acts as the Proton acceptor. AMP is bound by residues T202, H205, G227, and K231. D254 contributes to the Mg(2+) binding site.

It belongs to the inositol monophosphatase superfamily. Mg(2+) serves as cofactor.

The catalysed reaction is adenosine 3',5'-bisphosphate + H2O = AMP + phosphate. It catalyses the reaction adenosine 2',5'-bisphosphate + H2O = AMP + phosphate. It carries out the reaction 3'-phosphoadenylyl sulfate + H2O = adenosine 5'-phosphosulfate + phosphate. The enzyme catalyses 1D-myo-inositol 1,4-bisphosphate + H2O = 1D-myo-inositol 4-phosphate + phosphate. The catalysed reaction is 1D-myo-inositol 1,3,4-trisphosphate + H2O = 1D-myo-inositol 3,4-bisphosphate + phosphate. With respect to regulation, inhibited by Li(+) and Ca(2+), but not by Na(+). Its function is as follows. Phosphatase that converts 3'(2')-phosphoadenosine 5'-phosphate (PAP) to AMP and adenosine 3'-phosphate 5'-phosphosulfate (PAPS) to adenosine 5'-phosphosulfate (APS). Is also able to hydrolyze inositol 1,4-bisphosphate (Ins(1,4)P2) and inositol 1,3,4-trisphosphate (Ins(1,3,4)P3), but is not active on AMP, 3'-AMP, fructose-1,6-bisphosphate, Ins(1)P, Ins(2)P and Ins(1,4,5)P3. Probably prevents the toxic accumulation of PAP, a compound which inhibits a variety of proteins, including PAPS-utilizing enzymes such as sulfotransferases, and RNA processing enzymes. Could also play a role in inositol recycling and phosphoinositide metabolism. This chain is 3'(2'),5'-bisphosphate nucleotidase 1 (bpnt1), found in Dictyostelium discoideum (Social amoeba).